The following is a 105-amino-acid chain: uncharacterized protein (105 aa).

Residues M1–A11 are compositionally biased toward basic residues. The interval M1–H20 is disordered.

Belongs to the ALB1 family.

It localises to the nucleus. Its subcellular location is the nucleolus. This is an uncharacterized protein from Schizosaccharomyces pombe (strain 972 / ATCC 24843) (Fission yeast).